We begin with the raw amino-acid sequence, 60 residues long: DNA gyrase inhibitor YacG (60 aa).

Zn(2+) is bound by residues Cys-3, Cys-6, Cys-18, and Cys-22. Residues 38–60 form a disordered region; that stretch reads PASSEDEEEPLDQEAETPVAPRH. The segment covering 41–52 has biased composition (acidic residues); the sequence is SEDEEEPLDQEA.

It belongs to the DNA gyrase inhibitor YacG family. Interacts with GyrB. Zn(2+) serves as cofactor.

Functionally, inhibits all the catalytic activities of DNA gyrase by preventing its interaction with DNA. Acts by binding directly to the C-terminal domain of GyrB, which probably disrupts DNA binding by the gyrase. In Ruegeria pomeroyi (strain ATCC 700808 / DSM 15171 / DSS-3) (Silicibacter pomeroyi), this protein is DNA gyrase inhibitor YacG.